The primary structure comprises 609 residues: Grainyhead-like protein 1 homolog (609 aa).

Residues 1–91 form a transcription activation region; that stretch reads MTQDYDNKRP…EHDHADHEHS (91 aa). The disordered stretch occupies residues 183 to 207; it reads SDHFTSNNQPPNSQRRTPDSTFSET. Polar residues predominate over residues 185–206; the sequence is HFTSNNQPPNSQRRTPDSTFSE. One can recognise a Grh/CP2 DB domain in the interval 239–465; that stretch reads AGNNFEYTLE…DLDTQPVLFI (227 aa). 2 interaction with DNA regions span residues 371 to 380 and 418 to 421; these read TDFSSQKGVK and RKIR.

This sequence belongs to the grh/CP2 family. Grainyhead subfamily. As to quaternary structure, binds DNA as homodimer.

It is found in the nucleus. Functionally, transcription factor involved in epithelial development. Binds directly to the consensus DNA sequence 5'-AACCGGTT-3' and modulates expression of epidermal-specific genes, including XK81A1. Important regulator of DSG1 in the context of epidermal differentiation. Regulates the maintenance of skin barrier. No genetic interaction with GRHL3, nor functional cooperativity due to diverse target gene selectivity during epithelia development. Functions downstream of BMP-signaling cascade modulating endogenous bmp4-responsive targets. The polypeptide is Grainyhead-like protein 1 homolog (Xenopus laevis (African clawed frog)).